The sequence spans 179 residues: Peptidyl-tRNA hydrolase (179 aa).

A tRNA-binding site is contributed by Y14. H19 functions as the Proton acceptor in the catalytic mechanism. Y60, N62, and N108 together coordinate tRNA.

This sequence belongs to the PTH family. Monomer.

The protein resides in the cytoplasm. It carries out the reaction an N-acyl-L-alpha-aminoacyl-tRNA + H2O = an N-acyl-L-amino acid + a tRNA + H(+). Its function is as follows. Hydrolyzes ribosome-free peptidyl-tRNAs (with 1 or more amino acids incorporated), which drop off the ribosome during protein synthesis, or as a result of ribosome stalling. In terms of biological role, catalyzes the release of premature peptidyl moieties from peptidyl-tRNA molecules trapped in stalled 50S ribosomal subunits, and thus maintains levels of free tRNAs and 50S ribosomes. The sequence is that of Peptidyl-tRNA hydrolase from Mycoplasma mobile (strain ATCC 43663 / 163K / NCTC 11711) (Mesomycoplasma mobile).